Reading from the N-terminus, the 145-residue chain is Ecdysteroid-regulated 16 kDa protein (145 aa).

The first 16 residues, 1-16, serve as a signal peptide directing secretion; it reads MLFYITVTVLLVSAQA. Disulfide bonds link cysteine 22–cysteine 137 and cysteine 90–cysteine 97. N-linked (GlcNAc...) asparagine glycosylation is present at asparagine 51.

This sequence belongs to the NPC2 family.

Its subcellular location is the secreted. This chain is Ecdysteroid-regulated 16 kDa protein (ESR16), found in Manduca sexta (Tobacco hawkmoth).